The chain runs to 315 residues: Lipoyl synthase (315 aa).

Positions 62, 67, 73, 88, 92, 95, and 302 each coordinate [4Fe-4S] cluster. In terms of domain architecture, Radical SAM core spans Cys-73–Ser-291.

This sequence belongs to the radical SAM superfamily. Lipoyl synthase family. [4Fe-4S] cluster serves as cofactor.

The protein localises to the cytoplasm. It carries out the reaction [[Fe-S] cluster scaffold protein carrying a second [4Fe-4S](2+) cluster] + N(6)-octanoyl-L-lysyl-[protein] + 2 oxidized [2Fe-2S]-[ferredoxin] + 2 S-adenosyl-L-methionine + 4 H(+) = [[Fe-S] cluster scaffold protein] + N(6)-[(R)-dihydrolipoyl]-L-lysyl-[protein] + 4 Fe(3+) + 2 hydrogen sulfide + 2 5'-deoxyadenosine + 2 L-methionine + 2 reduced [2Fe-2S]-[ferredoxin]. It participates in protein modification; protein lipoylation via endogenous pathway; protein N(6)-(lipoyl)lysine from octanoyl-[acyl-carrier-protein]: step 2/2. In terms of biological role, catalyzes the radical-mediated insertion of two sulfur atoms into the C-6 and C-8 positions of the octanoyl moiety bound to the lipoyl domains of lipoate-dependent enzymes, thereby converting the octanoylated domains into lipoylated derivatives. The protein is Lipoyl synthase of Coxiella burnetii (strain CbuG_Q212) (Coxiella burnetii (strain Q212)).